Reading from the N-terminus, the 613-residue chain is tRNA 5-methylaminomethyl-2-thiouridine biosynthesis bifunctional protein MnmC (613 aa).

Positions 1-225 are tRNA (mnm(5)s(2)U34)-methyltransferase; sequence MKKAKLIFKD…KREMIKAYLE (225 aa). The interval 252 to 613 is FAD-dependent cmnm(5)s(2)U34 oxidoreductase; that stretch reads IGAGISSAVL…FLIRKLKKGL (362 aa).

The protein in the N-terminal section; belongs to the methyltransferase superfamily. tRNA (mnm(5)s(2)U34)-methyltransferase family. In the C-terminal section; belongs to the DAO family. Requires FAD as cofactor.

It is found in the cytoplasm. The catalysed reaction is 5-aminomethyl-2-thiouridine(34) in tRNA + S-adenosyl-L-methionine = 5-methylaminomethyl-2-thiouridine(34) in tRNA + S-adenosyl-L-homocysteine + H(+). In terms of biological role, catalyzes the last two steps in the biosynthesis of 5-methylaminomethyl-2-thiouridine (mnm(5)s(2)U) at the wobble position (U34) in tRNA. Catalyzes the FAD-dependent demodification of cmnm(5)s(2)U34 to nm(5)s(2)U34, followed by the transfer of a methyl group from S-adenosyl-L-methionine to nm(5)s(2)U34, to form mnm(5)s(2)U34. The chain is tRNA 5-methylaminomethyl-2-thiouridine biosynthesis bifunctional protein MnmC from Campylobacter jejuni subsp. jejuni serotype O:2 (strain ATCC 700819 / NCTC 11168).